The following is a 370-amino-acid chain: Putative agmatine deiminase (370 aa).

The segment covering 1-19 (MTNMNVDATQLTTKPSQDG) has biased composition (polar residues). The disordered stretch occupies residues 1-20 (MTNMNVDATQLTTKPSQDGF). Residue Cys-361 is the Amidino-cysteine intermediate of the active site.

Belongs to the agmatine deiminase family.

The enzyme catalyses agmatine + H2O = N-carbamoylputrescine + NH4(+). The chain is Putative agmatine deiminase from Shewanella frigidimarina (strain NCIMB 400).